Here is a 294-residue protein sequence, read N- to C-terminus: 4-hydroxybenzoate octaprenyltransferase (294 aa).

Helical transmembrane passes span 37-57, 101-121, 142-162, 169-189, 219-239, 241-261, and 271-293; these read LWAM…WIFF, LAVA…LNAL, FFAI…PMAF, VPFV…AYDT, IMIC…LLGL, WPYY…YTLI, and AAFR…AYLL.

It belongs to the UbiA prenyltransferase family. Mg(2+) is required as a cofactor.

The protein resides in the cell inner membrane. The catalysed reaction is all-trans-octaprenyl diphosphate + 4-hydroxybenzoate = 4-hydroxy-3-(all-trans-octaprenyl)benzoate + diphosphate. It functions in the pathway cofactor biosynthesis; ubiquinone biosynthesis. In terms of biological role, catalyzes the prenylation of para-hydroxybenzoate (PHB) with an all-trans polyprenyl group. Mediates the second step in the final reaction sequence of ubiquinone-8 (UQ-8) biosynthesis, which is the condensation of the polyisoprenoid side chain with PHB, generating the first membrane-bound Q intermediate 3-octaprenyl-4-hydroxybenzoate. This chain is 4-hydroxybenzoate octaprenyltransferase, found in Cupriavidus metallidurans (strain ATCC 43123 / DSM 2839 / NBRC 102507 / CH34) (Ralstonia metallidurans).